A 315-amino-acid chain; its full sequence is Olfactory receptor 4K3 (315 aa).

Residues 1 to 25 (MAWSNQSAVTEFILRGLSSSLELQI) are Extracellular-facing. A glycan (N-linked (GlcNAc...) asparagine) is linked at asparagine 5. Residues 26–49 (FYFLFFSIVYAATVLGNLLIVVTI) form a helical membrane-spanning segment. The Cytoplasmic segment spans residues 50–57 (ASEPHLHS). The helical transmembrane segment at 58 to 79 (PMYFLLGNLSFIDMSLASFATP) threads the bilayer. The Extracellular segment spans residues 80–100 (KMIADFLREHKAISFEGCMTQ). An intrachain disulfide couples cysteine 97 to cysteine 189. Residues 101-120 (MFFLHLLGGAEIVLLISMSF) traverse the membrane as a helical segment. Residues 121–139 (DRYVAICKPLHYLTIMSRR) lie on the Cytoplasmic side of the membrane. The chain crosses the membrane as a helical span at residues 140–158 (MCVGLVILSWIVGIFHALS). At 159–195 (QLAFTVNLPFCGPNEVDSFFCDLPLVIKLACVDTYIL) the chain is on the extracellular side. Residues 196–219 (GVFMISTSGMIALVCFILLVISYT) traverse the membrane as a helical segment. The Cytoplasmic portion of the chain corresponds to 220–235 (IILVTVRQRSSGGSSK). Residues 236–258 (ALSTCSAHFTVVTLFFGPCTFIY) traverse the membrane as a helical segment. Residues 259–269 (VWPFTNFPIDK) lie on the Extracellular side of the membrane. The helical transmembrane segment at 270 to 289 (VLSVFYTIYTPLLNPVIYTV) threads the bilayer. Residues 290–315 (RNKDVKYSMRKLSSHIFKSRKTDHTP) are Cytoplasmic-facing.

It belongs to the G-protein coupled receptor 1 family.

It localises to the cell membrane. In terms of biological role, odorant receptor. This Homo sapiens (Human) protein is Olfactory receptor 4K3 (OR4K3).